Consider the following 354-residue polypeptide: Probable RNA methyltransferase AZOSEA28700 (354 aa).

The Proton acceptor role is filled by glutamate 88. The Radical SAM core domain maps to 91–317; that stretch reads LLPRDGLCVS…TKLRHSAGQD (227 aa). A disulfide bridge connects residues cysteine 98 and cysteine 322. Cysteine 105, cysteine 109, and cysteine 112 together coordinate [4Fe-4S] cluster. S-adenosyl-L-methionine is bound by residues 150–151, serine 180, 203–205, and asparagine 279; these read GE and SLH. Cysteine 322 functions as the S-methylcysteine intermediate in the catalytic mechanism.

It belongs to the radical SAM superfamily. RlmN family. It depends on [4Fe-4S] cluster as a cofactor.

The protein resides in the cytoplasm. This is Probable RNA methyltransferase AZOSEA28700 from Aromatoleum aromaticum (strain DSM 19018 / LMG 30748 / EbN1) (Azoarcus sp. (strain EbN1)).